Reading from the N-terminus, the 45-residue chain is Photosystem II reaction center protein K (45 aa).

Positions methionine 1–alanine 8 are excised as a propeptide. The helical transmembrane segment at isoleucine 23–glycine 43 threads the bilayer.

This sequence belongs to the PsbK family. As to quaternary structure, PSII is composed of 1 copy each of membrane proteins PsbA, PsbB, PsbC, PsbD, PsbE, PsbF, PsbH, PsbI, PsbJ, PsbK, PsbL, PsbM, PsbT, PsbX, PsbY, PsbZ, Psb30/Ycf12, at least 3 peripheral proteins of the oxygen-evolving complex and a large number of cofactors. It forms dimeric complexes.

It is found in the plastid. The protein resides in the chloroplast thylakoid membrane. One of the components of the core complex of photosystem II (PSII). PSII is a light-driven water:plastoquinone oxidoreductase that uses light energy to abstract electrons from H(2)O, generating O(2) and a proton gradient subsequently used for ATP formation. It consists of a core antenna complex that captures photons, and an electron transfer chain that converts photonic excitation into a charge separation. This Porphyra purpurea (Red seaweed) protein is Photosystem II reaction center protein K.